We begin with the raw amino-acid sequence, 314 residues long: Hydroxyethylthiazole kinase (314 aa).

Substrate is bound at residue methionine 70. Positions 145 and 217 each coordinate ATP. Position 244 (glycine 244) interacts with substrate.

Belongs to the Thz kinase family. Mg(2+) serves as cofactor.

It carries out the reaction 5-(2-hydroxyethyl)-4-methylthiazole + ATP = 4-methyl-5-(2-phosphooxyethyl)-thiazole + ADP + H(+). It participates in cofactor biosynthesis; thiamine diphosphate biosynthesis; 4-methyl-5-(2-phosphoethyl)-thiazole from 5-(2-hydroxyethyl)-4-methylthiazole: step 1/1. In terms of biological role, catalyzes the phosphorylation of the hydroxyl group of 4-methyl-5-beta-hydroxyethylthiazole (THZ). In Bifidobacterium longum (strain DJO10A), this protein is Hydroxyethylthiazole kinase.